A 551-amino-acid chain; its full sequence is ATPase expression protein 2, mitochondrial (551 aa).

Residues 530 to 551 are disordered; sequence AQKAQKRFDDEEEDSMLLGRLW.

It belongs to the AEP2 family. Binds to the 5'UTR of the OLI1 mRNA.

The protein localises to the mitochondrion. Its function is as follows. Required for translation of the mitochondrial OLI1 transcript coding for the mitochondrial ATP synthase subunit 9. The polypeptide is ATPase expression protein 2, mitochondrial (AEP2) (Lachancea thermotolerans (strain ATCC 56472 / CBS 6340 / NRRL Y-8284) (Yeast)).